Reading from the N-terminus, the 3122-residue chain is DNA polymerase zeta catalytic subunit (3122 aa).

5 disordered regions span residues 270–289, 425–457, 487–509, 524–545, and 842–886; these read QRRR…SQDC, GYQG…NEPQ, LCRN…EMEW, LDGT…RAHS, and TSTK…TFEN. Positions 277 to 286 are enriched in polar residues; that stretch reads ESSQISQPES. Positions 497-509 are enriched in acidic residues; it reads EEDDSSSEEEMEW. Polar residues-rich tracts occupy residues 533–545 and 842–860; these read DNPL…RAHS and TSTK…THND. A Phosphoserine modification is found at Ser-1029. Disordered stretches follow at residues 1034–1075, 1154–1285, 1429–1453, 1538–1616, 1842–1869, 1959–1979, and 2091–2138; these read YPIY…TLSF, VYNT…PTGI, VSVS…ESQT, KAQS…LSDD, NDVL…SFTP, NPRP…ESSN, and AAVP…RHSS. Thr-1040 carries the post-translational modification Phosphothreonine. 2 stretches are compositionally biased toward basic residues: residues 1042-1063 and 1166-1179; these read KKSH…KQHR and KASR…KSKA. Residues 1215-1239 show a composition bias toward basic and acidic residues; that stretch reads RANEKSLSRKHAIPADEKMKPHSEA. Residues 1243-1270 show a composition bias toward polar residues; that stretch reads PNHQSVSELTSSSGAQALSKQKEMSQTG. Low complexity predominate over residues 1429-1440; sequence VSVSEQSKTSET. Composition is skewed to polar residues over residues 1441–1453 and 1538–1561; these read CSPG…ESQT and KAQS…ISVS. Residues 1566–1587 are compositionally biased toward basic residues; the sequence is KANKRTRPVTSPRKPRTPRRTK. Basic and acidic residues predominate over residues 1588–1598; sequence PKEQTPRRLKV. The span at 1602–1615 shows a compositional bias: polar residues; it reads NLQTSGHLDNSLSD. Positions 1844–1895 are mediates interaction with MAD2L2; that stretch reads VLTPTPDSSPRSTSSPLQSKNGSFTPRTAHILKPLMSPPSREEIVATLLDHD. Over residues 1846-1859 the composition is skewed to low complexity; the sequence is TPTPDSSPRSTSSP. Over residues 1860-1869 the composition is skewed to polar residues; the sequence is LQSKNGSFTP. Residue Ser-1964 is modified to Phosphoserine. Residues Cys-3034, Cys-3037, Cys-3046, and Cys-3049 each contribute to the Zn(2+) site. The CysA-type zinc finger occupies 3034-3049; it reads CPVCDDLTQHGICSKC. 4 residues coordinate [4Fe-4S] cluster: Cys-3078, Cys-3081, Cys-3091, and Cys-3096. The short motif at 3078–3096 is the CysB motif element; sequence CRNCTGSFDRHIPCVSLNC.

It belongs to the DNA polymerase type-B family. In terms of assembly, heterodimer with MAD2L2. This dimer forms the minimal DNA polymerase zeta complex (Pol-zeta2), with REV3L bearing DNA polymerase catalytic activity, although its activity is very low in this context. Component of the tetrameric Pol-zeta complex (Pol-zeta4), which consists of REV3L, MAD2L2, POLD2 and POLD3; Pol-zeta4 is the fully active form of DNA polymerase zeta. [4Fe-4S] cluster serves as cofactor.

It is found in the nucleus. It catalyses the reaction DNA(n) + a 2'-deoxyribonucleoside 5'-triphosphate = DNA(n+1) + diphosphate. In terms of biological role, catalytic subunit of the DNA polymerase zeta complex, an error-prone polymerase specialized in translesion DNA synthesis (TLS). Lacks an intrinsic 3'-5' exonuclease activity and thus has no proofreading function. The chain is DNA polymerase zeta catalytic subunit (Rev3l) from Mus musculus (Mouse).